Reading from the N-terminus, the 510-residue chain is Chromosomal replication initiator protein DnaA (510 aa).

The interval M1–D107 is domain I, interacts with DnaA modulators. The tract at residues D107–T169 is domain II. Positions P119 to G168 are disordered. A domain III, AAA+ region region spans residues S170 to A386. ATP contacts are provided by G214, G216, K217, and T218. Residues S387–R510 form a domain IV, binds dsDNA region.

It belongs to the DnaA family. Oligomerizes as a right-handed, spiral filament on DNA at oriC.

The protein localises to the cytoplasm. Functionally, plays an essential role in the initiation and regulation of chromosomal replication. ATP-DnaA binds to the origin of replication (oriC) to initiate formation of the DNA replication initiation complex once per cell cycle. Binds the DnaA box (a 9 base pair repeat at the origin) and separates the double-stranded (ds)DNA. Forms a right-handed helical filament on oriC DNA; dsDNA binds to the exterior of the filament while single-stranded (ss)DNA is stabiized in the filament's interior. The ATP-DnaA-oriC complex binds and stabilizes one strand of the AT-rich DNA unwinding element (DUE), permitting loading of DNA polymerase. After initiation quickly degrades to an ADP-DnaA complex that is not apt for DNA replication. Binds acidic phospholipids. In Mycobacterium marinum (strain ATCC BAA-535 / M), this protein is Chromosomal replication initiator protein DnaA.